The following is a 156-amino-acid chain: Cyanate hydratase (156 aa).

Residues Arg96, Glu99, and Ser122 contribute to the active site.

The protein belongs to the cyanase family.

It carries out the reaction cyanate + hydrogencarbonate + 3 H(+) = NH4(+) + 2 CO2. Its function is as follows. Catalyzes the reaction of cyanate with bicarbonate to produce ammonia and carbon dioxide. The sequence is that of Cyanate hydratase from Escherichia coli O7:K1 (strain IAI39 / ExPEC).